The chain runs to 115 residues: Beta-2-microglobulin (115 aa).

The signal sequence occupies residues 1-18 (MGLLICSLLLGLLCCSMA). Residues 23 to 114 (PKVEVYTREP…KSKDHFLMIG (92 aa)) enclose the Ig-like C1-type domain.

The protein belongs to the beta-2-microglobulin family. Heterodimer of an alpha chain and a beta chain. Beta-2-microglobulin is the beta-chain of major histocompatibility complex class I molecules.

It localises to the secreted. In terms of biological role, component of the class I major histocompatibility complex (MHC). Involved in the presentation of peptide antigens to the immune system. This chain is Beta-2-microglobulin (b2m), found in Paralichthys olivaceus (Bastard halibut).